The following is a 745-amino-acid chain: Copper-transporting ATPase (745 aa).

In terms of domain architecture, HMA spans 1–67 (MKESFYIEGM…LIEKLGYSPK (67 aa)). Residues 1 to 83 (MKESFYIEGM…KKEFFSPNVK (83 aa)) lie on the Cytoplasmic side of the membrane. 2 residues coordinate Cu cation: Cys-12 and Cys-15. The helical transmembrane segment at 84 to 104 (LALAVIFTLFVVYLSMGAMLS) threads the bilayer. Residues 105-124 (PSLLPESLLAINNHSNFLNA) are Extracellular-facing. A helical transmembrane segment spans residues 125–144 (CLQLIGALIVMHLGRDFYIQ). The Cytoplasmic segment spans residues 145 to 151 (GFKALWH). A helical transmembrane segment spans residues 152–172 (RQPNMSSLIAIGTSAALISSL). Topologically, residues 173–194 (WQLYLVYTNHYTDQWSYGHYYF) are extracellular. A helical membrane pass occupies residues 195–215 (ESVCVILMFVMVGKRIENVSK). At 216–343 (DKALDAMQAL…KAEISRLADK (128 aa)) the chain is on the cytoplasmic side. Residues 344-366 (VSSVFVPSVIAIAILAFVVWLII) traverse the membrane as a helical segment. Topologically, residues 367–379 (APKPDFWWNFGIA) are extracellular. Residues 380–397 (LEVFVSVLVISCPCALGL) traverse the membrane as a helical segment. Residues 398–685 (ATPMSILVAN…KLSQATIKNI (288 aa)) lie on the Cytoplasmic side of the membrane. Residue Asp-435 is the 4-aspartylphosphate intermediate of the active site. Mg(2+)-binding residues include Asp-631 and Asp-635. A helical transmembrane segment spans residues 686–705 (KENLFWAFCYNSVFIPLACG). Topologically, residues 706 to 716 (VLYKANIMLSP) are extracellular. Residues 717-735 (AIAGLAMSLSSVSVVLNSQ) form a helical membrane-spanning segment. Residues 736–745 (RLRNFKIKDH) are Cytoplasmic-facing.

This sequence belongs to the cation transport ATPase (P-type) (TC 3.A.3) family. Type IB subfamily.

The protein localises to the cell membrane. The catalysed reaction is Cu(2+)(in) + ATP + H2O = Cu(2+)(out) + ADP + phosphate + H(+). Functionally, probably involved in copper export. In Helicobacter pylori (Campylobacter pylori), this protein is Copper-transporting ATPase (copA).